Consider the following 219-residue polypeptide: Interleukin-12 subunit alpha (219 aa).

Positions 1–22 (MCPARSLLLVATLVLLDYLSLA) are cleaved as a signal peptide. N24, N93, and N107 each carry an N-linked (GlcNAc...) asparagine glycan. Cystine bridges form between C37–C110, C64–C196, and C85–C123.

The protein belongs to the IL-6 superfamily. Heterodimer with IL12B; disulfide-linked. This heterodimer is known as interleukin IL-12. Heterodimer with EBI3/IL27B; not disulfide-linked. This heterodimer is known as interleukin IL-35. Interacts with NBR1; this interaction promotes IL-12 secretion.

It is found in the secreted. In terms of biological role, heterodimerizes with IL12B to form the IL-12 cytokine or with EBI3/IL27B to form the IL-35 cytokine. IL-12 is primarily produced by professional antigen-presenting cells (APCs) such as B-cells and dendritic cells (DCs) as well as macrophages and granulocytes and regulates T-cell and natural killer-cell responses, induces the production of interferon-gamma (IFN-gamma), favors the differentiation of T-helper 1 (Th1) cells and is an important link between innate resistance and adaptive immunity. Mechanistically, exerts its biological effects through a receptor composed of IL12R1 and IL12R2 subunits. Binding to the receptor results in the rapid tyrosine phosphorylation of a number of cellular substrates including the JAK family kinases TYK2 and JAK2. In turn, recruited STAT4 gets phosphorylated and translocates to the nucleus where it regulates cytokine/growth factor responsive genes. As part of IL-35, plays essential roles in maintaining the immune homeostasis of the liver microenvironment and also functions as an immune-suppressive cytokine. Mediates biological events through unconventional receptors composed of IL12RB2 and gp130/IL6ST heterodimers or homodimers. Signaling requires the transcription factors STAT1 and STAT4, which form a unique heterodimer that binds to distinct DNA sites. This is Interleukin-12 subunit alpha (IL12A) from Cercocebus atys (Sooty mangabey).